The primary structure comprises 310 residues: tRNA uridine(34) hydroxylase (310 aa).

Residues 134–232 enclose the Rhodanese domain; sequence DDPDTLLIDT…YFEEVSQTES (99 aa). C192 serves as the catalytic Cysteine persulfide intermediate.

Belongs to the TrhO family.

It catalyses the reaction uridine(34) in tRNA + AH2 + O2 = 5-hydroxyuridine(34) in tRNA + A + H2O. Its function is as follows. Catalyzes oxygen-dependent 5-hydroxyuridine (ho5U) modification at position 34 in tRNAs. This Prochlorococcus marinus (strain MIT 9313) protein is tRNA uridine(34) hydroxylase.